We begin with the raw amino-acid sequence, 67 residues long: MARITVEDCLKHIPNRFELALAATYRARQLVQGHTPKVEAKDKPTVVALREIASGQVGIEMLKKVPT.

Belongs to the RNA polymerase subunit omega family. As to quaternary structure, the RNAP catalytic core consists of 2 alpha, 1 beta, 1 beta' and 1 omega subunit. When a sigma factor is associated with the core the holoenzyme is formed, which can initiate transcription.

It carries out the reaction RNA(n) + a ribonucleoside 5'-triphosphate = RNA(n+1) + diphosphate. Promotes RNA polymerase assembly. Latches the N- and C-terminal regions of the beta' subunit thereby facilitating its interaction with the beta and alpha subunits. The polypeptide is DNA-directed RNA polymerase subunit omega (Cupriavidus metallidurans (strain ATCC 43123 / DSM 2839 / NBRC 102507 / CH34) (Ralstonia metallidurans)).